Consider the following 1382-residue polypeptide: Hepatocyte growth factor receptor (1382 aa).

A signal peptide spans 1–24 (MKASAVLAPGILALLFTLVQGSDG). Residues 25–935 (ECHEALAKSE…VQPDQNFTGL (911 aa)) are Extracellular-facing. Positions 27-516 (HEALAKSEMN…TGKRITKIPL (490 aa)) constitute a Sema domain. N-linked (GlcNAc...) asparagine glycans are attached at residues N45, N100, and N106. 4 cysteine pairs are disulfide-bonded: C95–C101, C98–C160, C133–C141, and C173–C176. Residues N203 and N359 are each glycosylated (N-linked (GlcNAc...) asparagine). Cystine bridges form between C299-C364 and C386-C398. N400 and N406 each carry an N-linked (GlcNAc...) asparagine glycan. 4 cysteine pairs are disulfide-bonded: C521-C539, C527-C562, C530-C546, and C542-C552. IPT/TIG domains follow at residues 564–656 (PAIH…FSYV), 658–740 (PVIT…FSYQ), and 743–837 (PVVY…LIYV). Residue T583 is glycosylated (O-linked (Man) threonine). N608 and N636 each carry an N-linked (GlcNAc...) asparagine glycan. Residues T677 and T762 are each glycosylated (O-linked (Man) threonine). Residues N786, N880, and N931 are each glycosylated (N-linked (GlcNAc...) asparagine). Residues 936-956 (IVGVVSISIILLLLLGLFLWM) form a helical membrane-spanning segment. Residues 957 to 1382 (KKRKQIKDLG…QDNINGEVDT (426 aa)) are Cytoplasmic-facing. Phosphoserine is present on S967. Phosphothreonine is present on T978. Phosphoserine occurs at positions 991, 998, and 1001. At Y1004 the chain carries Phosphotyrosine. A Protein kinase domain is found at 1079 to 1346 (VHFNEVIGRG…RISAIFSTFI (268 aa)). Residues 1085 to 1093 (IGRGHFGCV) and K1111 each bind ATP. The active-site Proton acceptor is the D1205. Residues 1213–1382 (LDEKFTVKVA…QDNINGEVDT (170 aa)) form an interaction with RANBP9 region. Y1231 carries the phosphotyrosine modification. Residues Y1235 and Y1236 each carry the phosphotyrosine; by autocatalysis modification. At T1290 the chain carries Phosphothreonine. The interaction with MUC20 stretch occupies residues 1321-1360 (WHPKAEMRPSFSELVSRISAIFSTFIGEHYVHVNATYVNV). Phosphotyrosine; by autocatalysis is present on residues Y1350 and Y1357. Residue Y1366 is modified to Phosphotyrosine.

This sequence belongs to the protein kinase superfamily. Tyr protein kinase family. In terms of assembly, heterodimer made of an alpha chain (50 kDa) and a beta chain (145 kDa) which are disulfide linked. Binds PLXNB1. Interacts when phosphorylated with downstream effectors including STAT3, PIK3R1, SRC, PCLG1, GRB2 and GAB1. Interacts with SPSB1, SPSB2 and SPSB4. Interacts with INPP5D/SHIP1. When phosphorylated at Tyr-1357, interacts with INPPL1/SHIP2. Interacts with RANBP9 and RANBP10, as well as SPSB1, SPSB2, SPSB3 and SPSB4. SPSB1 binding occurs in the presence and in the absence of HGF, however HGF treatment has a positive effect on this interaction. Interacts with MUC20; prevents interaction with GRB2 and suppresses hepatocyte growth factor-induced cell proliferation. Interacts with GRB10. Interacts with PTPN1 and PTPN2. Interacts with HSP90AA1 and HSP90AB1; the interaction suppresses MET kinase activity. Interacts with tensin TNS3. Interacts (when phosphorylated) with tensin TNS4 (via SH2 domain); the interaction increases MET protein stability by inhibiting MET endocytosis and subsequent lysosomal degradation. Post-translationally, autophosphorylated in response to ligand binding on Tyr-1235 and Tyr-1236 in the kinase domain leading to further phosphorylation of Tyr-1350 and Tyr-1357 in the C-terminal multifunctional docking site. Dephosphorylated by PTPRJ at Tyr-1350 and Tyr-1366. Dephosphorylated by PTPN1 and PTPN2. Ubiquitinated. Ubiquitination by CBL regulates the receptor stability and activity through proteasomal degradation. In terms of processing, O-mannosylation of IPT/TIG domains by TMEM260 is required for protein maturation. O-mannosylated residues are composed of single mannose glycans that are not elongated or modified.

It is found in the membrane. It catalyses the reaction L-tyrosyl-[protein] + ATP = O-phospho-L-tyrosyl-[protein] + ADP + H(+). Its activity is regulated as follows. In its inactive state, the C-terminal tail interacts with the catalytic domain and inhibits the kinase activity. Upon ligand binding, the C-terminal tail is displaced and becomes phosphorylated, thus increasing the kinase activity. Its function is as follows. Receptor tyrosine kinase that transduces signals from the extracellular matrix into the cytoplasm by binding to hepatocyte growth factor/HGF ligand. Regulates many physiological processes including proliferation, scattering, morphogenesis and survival. Ligand binding at the cell surface induces autophosphorylation of MET on its intracellular domain that provides docking sites for downstream signaling molecules. Following activation by ligand, interacts with the PI3-kinase subunit PIK3R1, PLCG1, SRC, GRB2, STAT3 or the adapter GAB1. Recruitment of these downstream effectors by MET leads to the activation of several signaling cascades including the RAS-ERK, PI3 kinase-AKT, or PLCgamma-PKC. The RAS-ERK activation is associated with the morphogenetic effects while PI3K/AKT coordinates prosurvival effects. During embryonic development, MET signaling plays a role in gastrulation, development and migration of muscles and neuronal precursors, angiogenesis and kidney formation. In adults, participates in wound healing as well as organ regeneration and tissue remodeling. Also promotes differentiation and proliferation of hematopoietic cells. The chain is Hepatocyte growth factor receptor (MET) from Microcebus murinus (Gray mouse lemur).